Consider the following 330-residue polypeptide: Anthranilate phosphoribosyltransferase (330 aa).

5-phospho-alpha-D-ribose 1-diphosphate is bound by residues Gly-75, 78-79 (GD), Thr-83, 85-88 (NVST), 103-111 (KHGNRAASS), and Ala-115. Gly-75 provides a ligand contact to anthranilate. A Mg(2+)-binding site is contributed by Ser-87. An anthranilate-binding site is contributed by Asn-106. Residue Arg-161 participates in anthranilate binding. Mg(2+) contacts are provided by Asp-220 and Glu-221.

It belongs to the anthranilate phosphoribosyltransferase family. Homodimer. The cofactor is Mg(2+).

The enzyme catalyses N-(5-phospho-beta-D-ribosyl)anthranilate + diphosphate = 5-phospho-alpha-D-ribose 1-diphosphate + anthranilate. The protein operates within amino-acid biosynthesis; L-tryptophan biosynthesis; L-tryptophan from chorismate: step 2/5. Functionally, catalyzes the transfer of the phosphoribosyl group of 5-phosphorylribose-1-pyrophosphate (PRPP) to anthranilate to yield N-(5'-phosphoribosyl)-anthranilate (PRA). The chain is Anthranilate phosphoribosyltransferase from Erythrobacter litoralis (strain HTCC2594).